We begin with the raw amino-acid sequence, 507 residues long: ATP synthase subunit alpha, chloroplastic (507 aa).

Residue 170–177 (GDRQTGKT) participates in ATP binding.

Belongs to the ATPase alpha/beta chains family. In terms of assembly, F-type ATPases have 2 components, CF(1) - the catalytic core - and CF(0) - the membrane proton channel. CF(1) has five subunits: alpha(3), beta(3), gamma(1), delta(1), epsilon(1). CF(0) has four main subunits: a, b, b' and c.

The protein resides in the plastid. The protein localises to the chloroplast thylakoid membrane. It catalyses the reaction ATP + H2O + 4 H(+)(in) = ADP + phosphate + 5 H(+)(out). In terms of biological role, produces ATP from ADP in the presence of a proton gradient across the membrane. The alpha chain is a regulatory subunit. The polypeptide is ATP synthase subunit alpha, chloroplastic (Anthoceros angustus (Hornwort)).